The chain runs to 40 residues: Natriuretic peptide PaNP-b (40 aa).

Cys-9 and Cys-25 are joined by a disulfide. Residues 36–40 (IPGGS) constitute a propeptide that is removed on maturation.

The protein belongs to the natriuretic peptide family. In terms of tissue distribution, expressed by the venom gland.

It localises to the secreted. Snake venom natriuretic peptide that targets both NPR1 and NPR2. Exhibits hypotensive and vasodepressor activities. This Pseudechis australis (Mulga snake) protein is Natriuretic peptide PaNP-b.